The sequence spans 426 residues: Histidine--tRNA ligase (426 aa).

The protein belongs to the class-II aminoacyl-tRNA synthetase family. Homodimer.

Its subcellular location is the cytoplasm. It catalyses the reaction tRNA(His) + L-histidine + ATP = L-histidyl-tRNA(His) + AMP + diphosphate + H(+). This is Histidine--tRNA ligase from Colwellia psychrerythraea (strain 34H / ATCC BAA-681) (Vibrio psychroerythus).